The following is a 137-amino-acid chain: Small ribosomal subunit protein uS11 (137 aa).

Residues 1–25 (MADRRRGAARGGAARPRRRERKNIP) form a disordered region. The span at 15–25 (RPRRRERKNIP) shows a compositional bias: basic residues.

This sequence belongs to the universal ribosomal protein uS11 family. Part of the 30S ribosomal subunit. Interacts with proteins S7 and S18. Binds to IF-3.

In terms of biological role, located on the platform of the 30S subunit, it bridges several disparate RNA helices of the 16S rRNA. Forms part of the Shine-Dalgarno cleft in the 70S ribosome. The protein is Small ribosomal subunit protein uS11 of Thermomicrobium roseum (strain ATCC 27502 / DSM 5159 / P-2).